The primary structure comprises 749 residues: Cytosolic phospholipase A2 (749 aa).

The phospholipid binding stretch occupies residues 1–178 (MSFIDPYQHI…MKKLLGPKKS (178 aa)). Phosphoserine is present on Ser-2. A C2 domain is found at 6 to 122 (PYQHIIVEHQ…KVGEKKEVPF (117 aa)). Residues Asp-40, Thr-41, Asp-43, Asn-65, Asp-93, Ala-94, and Asn-95 each coordinate Ca(2+). Residues 140 to 740 (SCPDLRFSMA…SNVEARRFFN (601 aa)) form the PLA2c domain. Ser-228 acts as the Nucleophile in catalysis. Residue Thr-268 is modified to Phosphothreonine. The tract at residues 427–456 (KHIVSNDSSDSDDESQEPKGTENEDAERDY) is disordered. Phosphoserine occurs at positions 434, 435, and 437. Ser-505 bears the Phosphoserine; by MAPK mark. At Ser-515 the chain carries Phosphoserine. Lys-541 is covalently cross-linked (Glycyl lysine isopeptide (Lys-Gly) (interchain with G-Cter in SUMO2)). Asp-549 acts as the Proton acceptor in catalysis. Lys-606 participates in a covalent cross-link: Glycyl lysine isopeptide (Lys-Gly) (interchain with G-Cter in SUMO2). Phosphoserine is present on residues Ser-727 and Ser-729.

As to quaternary structure, interacts with KAT5. Phosphorylated at both Ser-505 and Ser-727 in response to mitogenic stimuli.

It localises to the cytoplasm. It is found in the golgi apparatus membrane. The protein resides in the nucleus envelope. The catalysed reaction is a 1,2-diacyl-sn-glycero-3-phosphocholine + H2O = a 1-acyl-sn-glycero-3-phosphocholine + a fatty acid + H(+). The enzyme catalyses a 1-O-alkyl-2-acyl-sn-glycero-3-phosphocholine + H2O = a 1-O-alkyl-sn-glycero-3-phosphocholine + a fatty acid + H(+). It catalyses the reaction a 1-acyl-sn-glycero-3-phosphocholine + H2O = sn-glycerol 3-phosphocholine + a fatty acid + H(+). It carries out the reaction 1-hexadecanoyl-2-(5Z,8Z,11Z,14Z-eicosatetraenoyl)-sn-glycero-3-phosphocholine + H2O = 1-hexadecanoyl-sn-glycero-3-phosphocholine + (5Z,8Z,11Z,14Z)-eicosatetraenoate + H(+). The catalysed reaction is 1,2-di-(5Z,8Z,11Z,14Z-eicosatetraenoyl)-sn-glycero-3-phosphocholine + H2O = 1-(5Z,8Z,11Z,14Z-eicosatetraenoyl)-sn-glycero-3-phosphocholine + (5Z,8Z,11Z,14Z)-eicosatetraenoate + H(+). The enzyme catalyses 1-octadecanoyl-2-(5Z,8Z,11Z,14Z-eicosatetraenoyl)-sn-glycero-3-phosphocholine + H2O = 1-octadecanoyl-sn-glycero-3-phosphocholine + (5Z,8Z,11Z,14Z)-eicosatetraenoate + H(+). It catalyses the reaction 1-hexadecanoyl-2-(9Z,12Z-octadecadienoyl)-sn-glycero-3-phosphocholine + H2O = (9Z,12Z)-octadecadienoate + 1-hexadecanoyl-sn-glycero-3-phosphocholine + H(+). It carries out the reaction 1-octadecanoyl-2-(9Z,12Z,15Z-octadecatrienoyl)-sn-glycero-3-phosphocholine + H2O = (9Z,12Z,15Z)-octadecatrienoate + 1-octadecanoyl-sn-glycero-3-phosphocholine + H(+). The catalysed reaction is 1-(5Z,8Z,11Z,14Z-eicosatetraenoyl)-2-hexadecanoyl-sn-glycero-3-phosphocholine + H2O = 1-(5Z,8Z,11Z,14Z-eicosatetraenoyl)-sn-glycero-3-phosphocholine + hexadecanoate + H(+). The enzyme catalyses 1-O-hexadecyl-2-(5Z,8Z,11Z,14Z)-eicosatetraenoyl-sn-glycero-3-phosphocholine + H2O = 1-O-hexadecyl-sn-glycero-3-phosphocholine + (5Z,8Z,11Z,14Z)-eicosatetraenoate + H(+). It catalyses the reaction 1,2-di-(9Z-octadecenoyl)-sn-glycero-3-phospho-(1'-sn-glycerol) + H2O = 1-(9Z-octadecenoyl)-sn-glycero-3-phospho-(1'-sn-glycerol) + (9Z)-octadecenoate + H(+). It carries out the reaction 1-octadecanoyl-2-(5Z,8Z,11Z,14Z-eicosatetraenoyl)-sn-glycero-3-phosphate + H2O = 1-octadecanoyl-sn-glycero-3-phosphate + (5Z,8Z,11Z,14Z)-eicosatetraenoate + H(+). The catalysed reaction is 1-hexadecanoyl-sn-glycero-3-phosphocholine + H2O = sn-glycerol 3-phosphocholine + hexadecanoate + H(+). The enzyme catalyses 2-(prostaglandin E2)-sn-glycero-3-phosphoethanolamine + H2O = sn-glycero-3-phosphoethanolamine + prostaglandin E2 + H(+). It catalyses the reaction 2-[(15S)-hydroxy-(5Z,8Z,11Z,13E)-eicosatetraenoyl]-sn-glycero-3-phosphocholine + H2O = (15S)-hydroxy-(5Z,8Z,11Z,13E)-eicosatetraenoate + sn-glycerol 3-phosphocholine + H(+). It carries out the reaction 2-[(15R)-hydroxy-(5Z,8Z,11Z,13E)-eicosatetraenoyl]-sn-glycero-3-phosphocholine + H2O = (15R)-hydroxy-(5Z,8Z,11Z,13E)-eicosatetraenoate + sn-glycerol 3-phosphocholine + H(+). The catalysed reaction is 2-(prostaglandin E2)-sn-glycero-3-phosphocholine + H2O = prostaglandin E2 + sn-glycerol 3-phosphocholine + H(+). The enzyme catalyses 2-[(11R)-hydroxy-(5Z,8Z,12E,14Z)-eicosatetraenoyl]-sn-glycero-3-phosphocholine + H2O = (11R)-hydroxy-(5Z,8Z,12E,14Z)-eicosatetraenoate + sn-glycerol 3-phosphocholine + H(+). It catalyses the reaction 1-(5Z,8Z,11Z,14Z-eicosatetraenoyl)-2-O-hexadecyl-sn-glycero-3-phosphocholine + H2O = 2-O-hexadecyl-sn-glycero-3-phosphocholine + (5Z,8Z,11Z,14Z)-eicosatetraenoate + H(+). It carries out the reaction 1-octadecanoyl-2-(5Z,8Z,11Z,14Z-eicosatetraenoyl)-sn-glycero-3-phosphocholine + glycerol = 1-(5Z,8Z,11Z,14Z-eicosatetraenoyl)-glycerol + 1-octadecanoyl-sn-glycero-3-phosphocholine. The catalysed reaction is 1-octadecanoyl-2-(9Z,12Z,15Z-octadecatrienoyl)-sn-glycero-3-phosphocholine + glycerol = 1-(9Z,12Z,15Z-octadecatrienoyl)-glycerol + 1-octadecanoyl-sn-glycero-3-phosphocholine. It functions in the pathway membrane lipid metabolism; glycerophospholipid metabolism. Its pathway is lipid metabolism; arachidonate metabolism. It participates in lipid metabolism; prostaglandin biosynthesis. The protein operates within lipid metabolism; leukotriene B4 biosynthesis. Activated by cytosolic calcium, which is necessary for binding to membrane lipids. Activated by phosphorylation in response to mitogenic stimuli. Its function is as follows. Has primarily calcium-dependent phospholipase and lysophospholipase activities, with a major role in membrane lipid remodeling and biosynthesis of lipid mediators of the inflammatory response. Plays an important role in embryo implantation and parturition through its ability to trigger prostanoid production. Preferentially hydrolyzes the ester bond of the fatty acyl group attached at sn-2 position of phospholipids (phospholipase A2 activity). Selectively hydrolyzes sn-2 arachidonoyl group from membrane phospholipids, providing the precursor for eicosanoid biosynthesis via the cyclooxygenase pathway. In an alternative pathway of eicosanoid biosynthesis, hydrolyzes sn-2 fatty acyl chain of eicosanoid lysophopholipids to release free bioactive eicosanoids. Hydrolyzes the ester bond of the fatty acyl group attached at sn-1 position of phospholipids (phospholipase A1 activity) only if an ether linkage rather than an ester linkage is present at the sn-2 position. This hydrolysis is not stereospecific. Has calcium-independent phospholipase A2 and lysophospholipase activities in the presence of phosphoinositides. Has O-acyltransferase activity. Catalyzes the transfer of fatty acyl chains from phospholipids to a primary hydroxyl group of glycerol (sn-1 or sn-3), potentially contributing to monoacylglycerol synthesis. The protein is Cytosolic phospholipase A2 (PLA2G4A) of Equus caballus (Horse).